Reading from the N-terminus, the 228-residue chain is Nuclear phosphoprotein UL3 homolog (228 aa).

The protein belongs to the alphaherpesvirinae HHV-1 UL3 family. Post-translationally, phosphorylated.

The protein localises to the host nucleus. The protein is Nuclear phosphoprotein UL3 homolog (MDV015) of Gallus gallus (Chicken).